A 34-amino-acid polypeptide reads, in one-letter code: Mytilin-A (34 aa).

4 cysteine pairs are disulfide-bonded: cysteine 2–cysteine 27, cysteine 6–cysteine 29, cysteine 10–cysteine 31, and cysteine 15–cysteine 34.

It localises to the secreted. Functionally, has antibacterial activity against A.viridans, B.megaterium, M.luteus, E.faecalis, S.aureus and E.coli. It is active against the marine species A.carrageenovora, P.alginovora and C.drobachiensis. The sequence is that of Mytilin-A from Mytilus edulis (Blue mussel).